The following is a 95-amino-acid chain: Aspartyl/glutamyl-tRNA(Asn/Gln) amidotransferase subunit C (95 aa).

Belongs to the GatC family. In terms of assembly, heterotrimer of A, B and C subunits.

It carries out the reaction L-glutamyl-tRNA(Gln) + L-glutamine + ATP + H2O = L-glutaminyl-tRNA(Gln) + L-glutamate + ADP + phosphate + H(+). The enzyme catalyses L-aspartyl-tRNA(Asn) + L-glutamine + ATP + H2O = L-asparaginyl-tRNA(Asn) + L-glutamate + ADP + phosphate + 2 H(+). Allows the formation of correctly charged Asn-tRNA(Asn) or Gln-tRNA(Gln) through the transamidation of misacylated Asp-tRNA(Asn) or Glu-tRNA(Gln) in organisms which lack either or both of asparaginyl-tRNA or glutaminyl-tRNA synthetases. The reaction takes place in the presence of glutamine and ATP through an activated phospho-Asp-tRNA(Asn) or phospho-Glu-tRNA(Gln). The chain is Aspartyl/glutamyl-tRNA(Asn/Gln) amidotransferase subunit C from Ectopseudomonas mendocina (strain ymp) (Pseudomonas mendocina).